The following is a 66-amino-acid chain: uncharacterized protein (66 aa).

2 helical membrane-spanning segments follow: residues 6-26 (KIIMILGAVLLIIGAVLHFVG) and 39-59 (VTFFFPVVTCIIISVVLSILL).

Its subcellular location is the cell membrane. This is an uncharacterized protein from Bacillus subtilis (strain 168).